The following is a 393-amino-acid chain: Sex hormone-binding globulin (393 aa).

An N-terminal signal peptide occupies residues 1–27; it reads MEGRGPLATSPRRRWLLLLLLLPHSHQ. 2 Laminin G-like domains span residues 35-208 and 215-381; these read VHLS…PRSC and GSFF…THSC. Disulfide bonds link cysteine 183/cysteine 208 and cysteine 353/cysteine 381. Residues asparagine 371 and asparagine 387 are each glycosylated (N-linked (GlcNAc...) asparagine).

As to quaternary structure, homodimer.

Its subcellular location is the secreted. Functions as an androgen transport protein, but may also be involved in receptor mediated processes. Each dimer binds one molecule of steroid. Specific for 5-alpha-dihydrotestosterone, testosterone, and 17-beta-estradiol. Regulates the plasma metabolic clearance rate of steroid hormones by controlling their plasma concentration. This chain is Sex hormone-binding globulin (SHBG), found in Crocuta crocuta (Spotted hyena).